A 364-amino-acid chain; its full sequence is UDP-3-O-acylglucosamine N-acyltransferase (364 aa).

His-258 serves as the catalytic Proton acceptor.

The protein belongs to the transferase hexapeptide repeat family. LpxD subfamily. Homotrimer.

The enzyme catalyses a UDP-3-O-[(3R)-3-hydroxyacyl]-alpha-D-glucosamine + a (3R)-hydroxyacyl-[ACP] = a UDP-2-N,3-O-bis[(3R)-3-hydroxyacyl]-alpha-D-glucosamine + holo-[ACP] + H(+). It participates in bacterial outer membrane biogenesis; LPS lipid A biosynthesis. In terms of biological role, catalyzes the N-acylation of UDP-3-O-acylglucosamine using 3-hydroxyacyl-ACP as the acyl donor. Is involved in the biosynthesis of lipid A, a phosphorylated glycolipid that anchors the lipopolysaccharide to the outer membrane of the cell. This is UDP-3-O-acylglucosamine N-acyltransferase from Burkholderia orbicola (strain MC0-3).